The sequence spans 312 residues: Very-long-chain 3-oxoacyl-CoA reductase (312 aa).

Residues 4–24 form a helical membrane-spanning segment; it reads ALPAAGFLYWVGASTVAYLAL. An NADP(+)-binding site is contributed by 50–79; it reads GEWAVVTGGTDGIGKSYAEELAKRGMKIVL. A run of 2 helical transmembrane segments spans residues 182–202 and 271–291; these read GAILNISSASGMYPVPLLTIY and GYPIHSLVASVSASLPSWLYF. Residue serine 189 coordinates substrate. Catalysis depends on tyrosine 202, which acts as the Proton acceptor. Residues 308–312 carry the Di-lysine motif motif; the sequence is KMKMN.

This sequence belongs to the short-chain dehydrogenases/reductases (SDR) family. 17-beta-HSD 3 subfamily.

The protein localises to the endoplasmic reticulum membrane. It carries out the reaction a very-long-chain (3R)-3-hydroxyacyl-CoA + NADP(+) = a very-long-chain 3-oxoacyl-CoA + NADPH + H(+). The catalysed reaction is 17beta-estradiol + NAD(+) = estrone + NADH + H(+). The enzyme catalyses 17beta-estradiol + NADP(+) = estrone + NADPH + H(+). It catalyses the reaction 3-oxooctadecanoyl-CoA + NADPH + H(+) = (3R)-hydroxyoctadecanoyl-CoA + NADP(+). It carries out the reaction (7Z,10Z,13Z,16Z)-3-oxodocosatetraenoyl-CoA + NADPH + H(+) = (3R)-hydroxy-(7Z,10Z,13Z,16Z)-docosatetraenoyl-CoA + NADP(+). The catalysed reaction is 3-oxo-(7Z,10Z,13Z,16Z,19Z)-docosapentaenoyl-CoA + NADPH + H(+) = (3R)-hydroxy-(7Z,10Z,13Z,16Z,19Z)-docosapentaenoyl-CoA + NADP(+). The enzyme catalyses (8Z,11Z,14Z)-3-oxoeicosatrienoyl-CoA + NADPH + H(+) = (3R)-hydroxy-(8Z,11Z,14Z)-eicosatrienoyl-CoA + NADP(+). The protein operates within lipid metabolism; fatty acid biosynthesis. Its pathway is steroid biosynthesis; estrogen biosynthesis. Functionally, catalyzes the second of the four reactions of the long-chain fatty acids elongation cycle. This endoplasmic reticulum-bound enzymatic process, allows the addition of two carbons to the chain of long- and very long-chain fatty acids/VLCFAs per cycle. This enzyme has a 3-ketoacyl-CoA reductase activity, reducing 3-ketoacyl-CoA to 3-hydroxyacyl-CoA, within each cycle of fatty acid elongation. Thereby, it may participate in the production of VLCFAs of different chain lengths that are involved in multiple biological processes as precursors of membrane lipids and lipid mediators. May also catalyze the transformation of estrone (E1) into estradiol (E2) and play a role in estrogen formation. This chain is Very-long-chain 3-oxoacyl-CoA reductase (HSD17B12), found in Bos taurus (Bovine).